The following is a 539-amino-acid chain: Phosphoenolpyruvate carboxykinase (ATP) (539 aa).

R61, Y195, and K201 together coordinate substrate. ATP-binding positions include K201, H220, and 238–246 (GLSGTGKTT). 2 residues coordinate Mn(2+): K201 and H220. D259 serves as a coordination point for Mn(2+). 3 residues coordinate ATP: E287, R325, and T450. Residue R325 coordinates substrate.

Belongs to the phosphoenolpyruvate carboxykinase (ATP) family. Requires Mn(2+) as cofactor.

It is found in the cytoplasm. It catalyses the reaction oxaloacetate + ATP = phosphoenolpyruvate + ADP + CO2. The protein operates within carbohydrate biosynthesis; gluconeogenesis. In terms of biological role, involved in the gluconeogenesis. Catalyzes the conversion of oxaloacetate (OAA) to phosphoenolpyruvate (PEP) through direct phosphoryl transfer between the nucleoside triphosphate and OAA. The protein is Phosphoenolpyruvate carboxykinase (ATP) of Methylorubrum populi (strain ATCC BAA-705 / NCIMB 13946 / BJ001) (Methylobacterium populi).